The following is a 284-amino-acid chain: Bifunctional protein FolD (284 aa).

NADP(+) is bound by residues 166–168 (GAS) and Ile232.

The protein belongs to the tetrahydrofolate dehydrogenase/cyclohydrolase family. In terms of assembly, homodimer.

It catalyses the reaction (6R)-5,10-methylene-5,6,7,8-tetrahydrofolate + NADP(+) = (6R)-5,10-methenyltetrahydrofolate + NADPH. It carries out the reaction (6R)-5,10-methenyltetrahydrofolate + H2O = (6R)-10-formyltetrahydrofolate + H(+). It participates in one-carbon metabolism; tetrahydrofolate interconversion. In terms of biological role, catalyzes the oxidation of 5,10-methylenetetrahydrofolate to 5,10-methenyltetrahydrofolate and then the hydrolysis of 5,10-methenyltetrahydrofolate to 10-formyltetrahydrofolate. This chain is Bifunctional protein FolD, found in Stutzerimonas stutzeri (strain A1501) (Pseudomonas stutzeri).